We begin with the raw amino-acid sequence, 154 residues long: SsrA-binding protein (154 aa).

This sequence belongs to the SmpB family.

It is found in the cytoplasm. Functionally, required for rescue of stalled ribosomes mediated by trans-translation. Binds to transfer-messenger RNA (tmRNA), required for stable association of tmRNA with ribosomes. tmRNA and SmpB together mimic tRNA shape, replacing the anticodon stem-loop with SmpB. tmRNA is encoded by the ssrA gene; the 2 termini fold to resemble tRNA(Ala) and it encodes a 'tag peptide', a short internal open reading frame. During trans-translation Ala-aminoacylated tmRNA acts like a tRNA, entering the A-site of stalled ribosomes, displacing the stalled mRNA. The ribosome then switches to translate the ORF on the tmRNA; the nascent peptide is terminated with the 'tag peptide' encoded by the tmRNA and targeted for degradation. The ribosome is freed to recommence translation, which seems to be the essential function of trans-translation. The sequence is that of SsrA-binding protein from Synechocystis sp. (strain ATCC 27184 / PCC 6803 / Kazusa).